Reading from the N-terminus, the 328-residue chain is 4-hydroxythreonine-4-phosphate dehydrogenase (328 aa).

Substrate contacts are provided by histidine 133 and threonine 134. Residues histidine 163, histidine 208, and histidine 263 each contribute to the a divalent metal cation site. Residues lysine 271, asparagine 280, and arginine 289 each coordinate substrate.

It belongs to the PdxA family. In terms of assembly, homodimer. The cofactor is Zn(2+). It depends on Mg(2+) as a cofactor. Requires Co(2+) as cofactor.

The protein localises to the cytoplasm. It catalyses the reaction 4-(phosphooxy)-L-threonine + NAD(+) = 3-amino-2-oxopropyl phosphate + CO2 + NADH. It participates in cofactor biosynthesis; pyridoxine 5'-phosphate biosynthesis; pyridoxine 5'-phosphate from D-erythrose 4-phosphate: step 4/5. Catalyzes the NAD(P)-dependent oxidation of 4-(phosphooxy)-L-threonine (HTP) into 2-amino-3-oxo-4-(phosphooxy)butyric acid which spontaneously decarboxylates to form 3-amino-2-oxopropyl phosphate (AHAP). The sequence is that of 4-hydroxythreonine-4-phosphate dehydrogenase from Chromobacterium violaceum (strain ATCC 12472 / DSM 30191 / JCM 1249 / CCUG 213 / NBRC 12614 / NCIMB 9131 / NCTC 9757 / MK).